The sequence spans 360 residues: Vitopine synthase (360 aa).

This sequence belongs to the lysopine/nopaline/octopine/opine/vitopine dehydrogenases family.

This chain is Vitopine synthase (vis), found in Allorhizobium ampelinum (strain ATCC BAA-846 / DSM 112012 / S4) (Agrobacterium vitis (strain S4)).